A 206-amino-acid polypeptide reads, in one-letter code: Photosynthetic reaction center cytochrome c-551 (206 aa).

A run of 3 helical transmembrane segments spans residues 10–30, 49–69, and 76–96; these read IALA…VSFL, FMGW…LGKM, and KWFL…FFSL. Residues Cys152, Cys155, His156, and Met182 each coordinate heme.

As to quaternary structure, component of the photosynthetic reaction center. The reaction center interacts with the Fenna-Matthews-Olson (FMO, fmoA) complex. Post-translationally, binds 1 heme group per subunit.

It is found in the cell inner membrane. In terms of biological role, monoheme cytochrome which is the immediate electron donor to P840 of the photosynthetic reaction center complex. The chain is Photosynthetic reaction center cytochrome c-551 (pscC) from Chlorobaculum parvum (strain DSM 263 / NCIMB 8327) (Chlorobium vibrioforme subsp. thiosulfatophilum).